A 167-amino-acid polypeptide reads, in one-letter code: MSEASIAKKAELVDAVAEKMKAAVSIVVVDSRGLTVEQDTVLRRNLRESAVEFKVIKNSILRRAAEKAGLEGFDDIFTGPSAVAFSNEDVVAPAKIINDFAKDAEALEIKGGAIEGAVSTKEEIQALAALPNREGLLSMLLSVLQAPVRNVAYAVKAVAESKDEDAA.

It belongs to the universal ribosomal protein uL10 family. As to quaternary structure, part of the ribosomal stalk of the 50S ribosomal subunit. The N-terminus interacts with L11 and the large rRNA to form the base of the stalk. The C-terminus forms an elongated spine to which L12 dimers bind in a sequential fashion forming a multimeric L10(L12)X complex.

Forms part of the ribosomal stalk, playing a central role in the interaction of the ribosome with GTP-bound translation factors. The polypeptide is Large ribosomal subunit protein uL10 (Streptococcus mutans serotype c (strain ATCC 700610 / UA159)).